Consider the following 670-residue polypeptide: MGETEKRIETHRIRCLSKLKMFLLAITCAFVSKTLSGSYMNSMLTQIERQFNIPTSLVGFINGSFEIGNLLLIIFVSYFGTKLHRPIMIGIGCVVMGLGCFLKSLPHFLMNQYEYESTVSVSGNLSSNSFLCMENGTQILRPTQDPSECTKEVKSLMWVYVLVGNIVRGMGETPILPLGISYIEDFAKFENSPLYIGLVETGAIIGPLIGLLLASFCANVYVDTGFVNTDDLIITPTDTRWVGAWWFGFLICAGVNVLTAIPFFFLPNTLPKEGLETNADIIKNENEDKQKEEVKKEKYGITKDFLPFMKSLSCNPIYMLFILVSVIQFNAFVNMISFMPKYLEQQYGISSSDAIFLMGIYNLPPICIGYIIGGLIMKKFKITVKQAAHIGCWLSLLEYLLYFLSFLMTCENSSVVGINTSYEGIPQDLYVENDIFADCNVDCNCPSKIWDPVCGNNGLSYLSACLAGCETSIGTGINMVFQNCSCIQTSGNSSAVLGLCDKGPDCSLMLQYFLILSAMSSFIYSLAAIPGYMVLLRCMKSEEKSLGVGLHTFCTRVFAGIPAPIYFGALMDSTCLHWGTLKCGESGACRIYDSTTFRYIYLGLPAALRGSSFVPALIILILLRKCHLPGENASSGTELIETKVKGKENECKDIYQKSTVLKDDELKTKL.

The Cytoplasmic segment spans residues 1–20 (MGETEKRIETHRIRCLSKLK). The chain crosses the membrane as a helical span at residues 21 to 40 (MFLLAITCAFVSKTLSGSYM). Residues 41–59 (NSMLTQIERQFNIPTSLVG) are Extracellular-facing. The chain crosses the membrane as a helical span at residues 60-80 (FINGSFEIGNLLLIIFVSYFG). Residues 81–86 (TKLHRP) lie on the Cytoplasmic side of the membrane. The helical transmembrane segment at 87-111 (IMIGIGCVVMGLGCFLKSLPHFLMN) threads the bilayer. At 112–155 (QYEYESTVSVSGNLSSNSFLCMENGTQILRPTQDPSECTKEVKS) the chain is on the extracellular side. N-linked (GlcNAc...) asparagine glycans are attached at residues asparagine 124 and asparagine 135. Residues 156 to 184 (LMWVYVLVGNIVRGMGETPILPLGISYIE) form a helical membrane-spanning segment. The Cytoplasmic portion of the chain corresponds to 185 to 203 (DFAKFENSPLYIGLVETGA). A helical membrane pass occupies residues 204-224 (IIGPLIGLLLASFCANVYVDT). At 225-242 (GFVNTDDLIITPTDTRWV) the chain is on the extracellular side. A helical membrane pass occupies residues 243 to 267 (GAWWFGFLICAGVNVLTAIPFFFLP). Residues 268–311 (NTLPKEGLETNADIIKNENEDKQKEEVKKEKYGITKDFLPFMKS) are Cytoplasmic-facing. Residues 312–333 (LSCNPIYMLFILVSVIQFNAFV) form a helical membrane-spanning segment. The Extracellular portion of the chain corresponds to 334–353 (NMISFMPKYLEQQYGISSSD). Residues 354 to 377 (AIFLMGIYNLPPICIGYIIGGLIM) form a helical membrane-spanning segment. Topologically, residues 378 to 381 (KKFK) are cytoplasmic. Residues 382–405 (ITVKQAAHIGCWLSLLEYLLYFLS) form a helical membrane-spanning segment. At 406 to 513 (FLMTCENSSV…PDCSLMLQYF (108 aa)) the chain is on the extracellular side. N-linked (GlcNAc...) asparagine glycans are attached at residues asparagine 412 and asparagine 419. The Kazal-like domain maps to 433 to 488 (NDIFADCNVDCNCPSKIWDPVCGNNGLSYLSACLAGCETSIGTGINMVFQNCSCIQ). Cystine bridges form between cysteine 439–cysteine 469, cysteine 445–cysteine 465, and cysteine 454–cysteine 486. Residues 514-536 (LILSAMSSFIYSLAAIPGYMVLL) form a helical membrane-spanning segment. The Cytoplasmic segment spans residues 537–545 (RCMKSEEKS). The chain crosses the membrane as a helical span at residues 546–571 (LGVGLHTFCTRVFAGIPAPIYFGALM). At 572-605 (DSTCLHWGTLKCGESGACRIYDSTTFRYIYLGLP) the chain is on the extracellular side. A helical membrane pass occupies residues 606 to 623 (AALRGSSFVPALIILILL). The Cytoplasmic portion of the chain corresponds to 624 to 670 (RKCHLPGENASSGTELIETKVKGKENECKDIYQKSTVLKDDELKTKL).

The protein belongs to the organo anion transporter (TC 2.A.60) family. Higher expression in the brain than in liver and kidney. Expressed in brain neurons in both cortex and hippocampus. Expressed in placental trophoblasts. Also expressed in lung and testes at lower levels. Expressed in the eye (at protein level). Expressed in the retina in the outer and inner nuclear layers, the inner plexiform layer and the ganglion cell layer. Expressed in liver and prostate. In testis, primarily localized to the basal membrane of Sertoli cells and weakly expressed in Leydig cells and within the tubules. Expressed in fetal brain and liver.

It is found in the cell membrane. It localises to the basal cell membrane. The enzyme catalyses taurocholate(out) = taurocholate(in). The catalysed reaction is glycocholate(out) = glycocholate(in). It carries out the reaction taurochenodeoxycholate(out) = taurochenodeoxycholate(in). It catalyses the reaction tauroursodeoxycholate(out) = tauroursodeoxycholate(in). The enzyme catalyses dehydroepiandrosterone 3-sulfate(out) = dehydroepiandrosterone 3-sulfate(in). The catalysed reaction is estrone 3-sulfate(out) = estrone 3-sulfate(in). It carries out the reaction 3,3',5'-triiodo-L-thyronine(out) = 3,3',5'-triiodo-L-thyronine(in). It catalyses the reaction L-thyroxine(out) = L-thyroxine(in). The enzyme catalyses taurodeoxycholate(out) = taurodeoxycholate(in). The catalysed reaction is glycodeoxycholate(out) = glycodeoxycholate(in). It carries out the reaction glycochenodeoxycholate(out) = glycochenodeoxycholate(in). It catalyses the reaction glycoursodeoxycholate(out) = glycoursodeoxycholate(in). The enzyme catalyses 17beta-estradiol 17-O-(beta-D-glucuronate)(out) = 17beta-estradiol 17-O-(beta-D-glucuronate)(in). The catalysed reaction is prostaglandin E2(out) = prostaglandin E2(in). It carries out the reaction substance P(out) = substance P(in). With respect to regulation, transport activity is inhibited by the grapefruit juice component naringin. In terms of biological role, na(+)-independent transporter that mediates the cellular uptake of a broad range of organic anions such as the endogenous bile salts cholate and deoxycholate, either in their unconjugated or conjugated forms (taurocholate and glycocholate), at the plasmam membrane. Responsible for intestinal absorption of bile acids. Transports dehydroepiandrosterone 3-sulfate (DHEAS), a major circulating steroid secreted by the adrenal cortex, as well as estrone 3-sulfate and 17beta-estradiol 17-O-(beta-D-glucuronate). Mediates apical uptake of all-trans-retinol (atROL) across human retinal pigment epithelium, which is essential to maintaining the integrity of the visual cycle and thus vision. Involved in the uptake of clinically used drugs. Capable of thyroid hormone transport (both T3 or 3,3',5'-triiodo-L-thyronine, and T4 or L-tyroxine). Also transports prostaglandin E2. Plays roles in blood-brain and -cerebrospinal fluid barrier transport of organic anions and signal mediators, and in hormone uptake by neural cells. May also play a role in the reuptake of neuropeptides such as substance P/TAC1 and vasoactive intestinal peptide/VIP released from retinal neurons. May play an important role in plasma and tissue distribution of the structurally diverse chemotherapeutic drugs methotrexate and paclitaxel. Shows a pH-sensitive substrate specificity which may be ascribed to the protonation state of the binding site and leads to a stimulation of substrate transport in an acidic microenvironment. Hydrogencarbonate/HCO3(-) acts as the probable counteranion that exchanges for organic anions. May contribute to regulate the transport of organic compounds in testis across the blood-testis-barrier. The polypeptide is Solute carrier organic anion transporter family member 1A2 (SLCO1A2) (Homo sapiens (Human)).